The primary structure comprises 514 residues: Cardiolipin synthase 2 (514 aa).

The next 3 helical transmembrane spans lie at 7–27 (LIFFVLLLFALFVSLRMFIDV), 41–61 (ILGIISILFTVSAFLIGCVIF), and 71–91 (LTWLIVLGIFPVFGFFAYLLF). 2 consecutive PLD phosphodiesterase domains span residues 249–276 (INYRNHRKIVIIDGNEGFVGGLNIGDEY) and 427–454 (EKGFLHSKVVIVDSDLASIGTANMDMRS). Catalysis depends on residues histidine 254, lysine 256, aspartate 261, histidine 432, lysine 434, and aspartate 439.

Belongs to the phospholipase D family. Cardiolipin synthase subfamily.

Its subcellular location is the cell membrane. It catalyses the reaction 2 a 1,2-diacyl-sn-glycero-3-phospho-(1'-sn-glycerol) = a cardiolipin + glycerol. Catalyzes the reversible phosphatidyl group transfer from one phosphatidylglycerol molecule to another to form cardiolipin (CL) (diphosphatidylglycerol) and glycerol. This is Cardiolipin synthase 2 (cls2) from Bacillus anthracis.